A 267-amino-acid chain; its full sequence is Levodione reductase (267 aa).

17 to 42 (LITGGGSGLGRATAVRLAAEGAKLSL) lines the NAD(+) pocket. S152 is a binding site for substrate. The active-site Proton acceptor is the Y165.

The protein belongs to the short-chain dehydrogenases/reductases (SDR) family.

The enzyme catalyses (4R)-hydroxy-(6R)-2,2,6-trimethylcyclohexanone + NAD(+) = (6R)-2,2,6-trimethyl-1,4-cyclohexanedione + NADH + H(+). Strongly activated by monovalent cations, such as K(+), Na(+), and NH4(+). In terms of biological role, catalyzes the regio- and stereoselective reversible NAD-dependent reduction of (6R)-2,2,6-trimethyl-1,4-cyclohexanedione (levodione) to (4R,6R)-4-hydroxy-2,2,6-trimethylcyclohexanone (actinol). The protein is Levodione reductase (lvr) of Leifsonia aquatica (Corynebacterium aquaticum).